Consider the following 648-residue polypeptide: Acetyl-coenzyme A synthetase (648 aa).

Residues 190–193, threonine 308, and asparagine 332 contribute to the CoA site; that span reads RGGK. Residues 384–386, 408–413, aspartate 497, and arginine 512 contribute to the ATP site; these read GEP and DTWWQT. Serine 520 contacts CoA. Arginine 523 lines the ATP pocket. The Mg(2+) site is built by valine 534, histidine 536, and valine 539. Arginine 581 contributes to the CoA binding site. Lysine 606 is modified (N6-acetyllysine).

Belongs to the ATP-dependent AMP-binding enzyme family. It depends on Mg(2+) as a cofactor. Post-translationally, acetylated. Deacetylation by the SIR2-homolog deacetylase activates the enzyme.

It catalyses the reaction acetate + ATP + CoA = acetyl-CoA + AMP + diphosphate. Functionally, catalyzes the conversion of acetate into acetyl-CoA (AcCoA), an essential intermediate at the junction of anabolic and catabolic pathways. AcsA undergoes a two-step reaction. In the first half reaction, AcsA combines acetate with ATP to form acetyl-adenylate (AcAMP) intermediate. In the second half reaction, it can then transfer the acetyl group from AcAMP to the sulfhydryl group of CoA, forming the product AcCoA. The polypeptide is Acetyl-coenzyme A synthetase (Bradyrhizobium diazoefficiens (strain JCM 10833 / BCRC 13528 / IAM 13628 / NBRC 14792 / USDA 110)).